The sequence spans 657 residues: Glycogen debranching enzyme (657 aa).

Catalysis depends on D336, which acts as the Nucleophile. E371 (proton donor) is an active-site residue. The disordered stretch occupies residues 460 to 479 (ANGEENRDGTNNNYSNNHGK).

This sequence belongs to the glycosyl hydrolase 13 family.

It catalyses the reaction Hydrolysis of (1-&gt;6)-alpha-D-glucosidic linkages to branches with degrees of polymerization of three or four glucose residues in limit dextrin.. It functions in the pathway glycan degradation; glycogen degradation. In terms of biological role, removes maltotriose and maltotetraose chains that are attached by 1,6-alpha-linkage to the limit dextrin main chain, generating a debranched limit dextrin. The polypeptide is Glycogen debranching enzyme (Escherichia coli (strain SMS-3-5 / SECEC)).